The following is a 533-amino-acid chain: MGKMRVRFPTLVLVLGIVFLMAVSIGIAYGEKDVLKSHERPEEREQEEWQPRRQRPQSRREEREQEQEQGSPSYPRRQSGYERRQYHERSEQREEREQEQQQGSPSYSRRQRNPYHFSSQRFQTLYKNRNGKIRVLERFDQRTNRLENLQNYRIVEFQSKPNTLILPKHSDADYVLVVLNGRATITIVNPDRRQAYNLEYGDALRIPAGSTSYILNPDDNQKLRVVKLAIPINNPGYFYDFYPSSTKDQQSYFSGFSRNTLEATFNTRYEEIQRIILGNEDEQEYEEQRRGQEQSDQDEGVIVIVSKKQIQKLTKHAQSSSGKDKPSDSGPFNLRSNEPIYSNKYGNFYEITPDRNPQVQDLNISLTYIKINEGALLLPHYNSKAIYVVVVDEGEGNYELVGIRDQQRQQDEQEEKEEEVIRYSARLSEGDIFVIPAGYPISINASSNLRLLGFGINADENQRNFLAGSKDNVIRQLDRAVNELTFPGSAEDIERLIKNQQQSYFANGQPQQQQQQQSEKEGRRGRRGSSLPF.

A signal peptide spans 1-30 (MGKMRVRFPTLVLVLGIVFLMAVSIGIAYG). A propeptide spanning residues 31 to 108 (EKDVLKSHER…EQQQGSPSYS (78 aa)) is cleaved from the precursor. Basic and acidic residues-rich tracts occupy residues 37 to 51 (SHER…EWQP) and 79 to 99 (SGYE…REQE). Disordered regions lie at residues 37–123 (SHER…QRFQ) and 315–337 (KHAQ…LRSN). 2 Cupin type-1 domains span residues 115 to 273 (YHFS…EEIQ) and 332 to 494 (FNLR…EDIE). Asparagine 363 and asparagine 444 each carry an N-linked (GlcNAc...) asparagine glycan. The interval 503 to 533 (SYFANGQPQQQQQQQSEKEGRRGRRGSSLPF) is disordered.

The protein belongs to the 7S seed storage protein family. In terms of assembly, multimers. Give rise to a complex array of processed forms, due to a large number of processing sites and changes in glycosylation.

Functionally, seed storage protein. Accumulates during seed development and is hydrolyzed after germination to provide a carbon and nitrogen source for the developing seedling. Its function is as follows. Has a lectin-like activity. The protein is Conglutin beta 2 of Lupinus albus (White lupine).